A 743-amino-acid chain; its full sequence is Phosphoribosylformylglycinamidine synthase subunit PurL (743 aa).

The active site involves H50. Residues Y53 and K92 each contribute to the ATP site. Residue E94 participates in Mg(2+) binding. Residues S95–H98 and R117 contribute to the substrate site. H96 serves as the catalytic Proton acceptor. Residue D118 participates in Mg(2+) binding. Q241 is a binding site for substrate. A Mg(2+)-binding site is contributed by D269. E313–Q315 is a binding site for substrate. 2 residues coordinate ATP: D495 and G532. Residue N533 coordinates Mg(2+). A substrate-binding site is contributed by S535.

The protein belongs to the FGAMS family. Monomer. Part of the FGAM synthase complex composed of 1 PurL, 1 PurQ and 2 PurS subunits.

It localises to the cytoplasm. It catalyses the reaction N(2)-formyl-N(1)-(5-phospho-beta-D-ribosyl)glycinamide + L-glutamine + ATP + H2O = 2-formamido-N(1)-(5-O-phospho-beta-D-ribosyl)acetamidine + L-glutamate + ADP + phosphate + H(+). The protein operates within purine metabolism; IMP biosynthesis via de novo pathway; 5-amino-1-(5-phospho-D-ribosyl)imidazole from N(2)-formyl-N(1)-(5-phospho-D-ribosyl)glycinamide: step 1/2. Functionally, part of the phosphoribosylformylglycinamidine synthase complex involved in the purines biosynthetic pathway. Catalyzes the ATP-dependent conversion of formylglycinamide ribonucleotide (FGAR) and glutamine to yield formylglycinamidine ribonucleotide (FGAM) and glutamate. The FGAM synthase complex is composed of three subunits. PurQ produces an ammonia molecule by converting glutamine to glutamate. PurL transfers the ammonia molecule to FGAR to form FGAM in an ATP-dependent manner. PurS interacts with PurQ and PurL and is thought to assist in the transfer of the ammonia molecule from PurQ to PurL. The chain is Phosphoribosylformylglycinamidine synthase subunit PurL from Rhizobium etli (strain CIAT 652).